A 206-amino-acid chain; its full sequence is MPAAPLTARAIGRIKPLLFVAGLLPFARWFWLGANDGLSANPVEFLTRSSGTWTLVCLLVTLAITPLRRLTGQPALVRLRRMCGLFAFFYGSLHFLAWVWWDRGLDPVSMLQDVGERPFITVGFAAFVLMAALAATSTQWAMRKLGKRWQTLHRAVYAIGLLAILHFWWHKAGKNDLQQPLLYGSVLALLLGWRVAAWWRRRGAAR.

The next 6 helical transmembrane spans lie at 14-34, 45-65, 82-102, 118-138, 149-169, and 179-199; these read IKPL…WLGA, FLTR…LAIT, MCGL…VWWD, PFIT…ATST, WQTL…HFWW, and QPLL…AAWW.

This sequence belongs to the MsrQ family. Heterodimer of a catalytic subunit (MsrP) and a heme-binding subunit (MsrQ). FMN serves as cofactor. Requires heme b as cofactor.

Its subcellular location is the cell inner membrane. Its function is as follows. Part of the MsrPQ system that repairs oxidized periplasmic proteins containing methionine sulfoxide residues (Met-O), using respiratory chain electrons. Thus protects these proteins from oxidative-stress damage caused by reactive species of oxygen and chlorine generated by the host defense mechanisms. MsrPQ is essential for the maintenance of envelope integrity under bleach stress, rescuing a wide series of structurally unrelated periplasmic proteins from methionine oxidation. MsrQ provides electrons for reduction to the reductase catalytic subunit MsrP, using the quinone pool of the respiratory chain. This chain is Protein-methionine-sulfoxide reductase heme-binding subunit MsrQ, found in Bordetella pertussis (strain Tohama I / ATCC BAA-589 / NCTC 13251).